Consider the following 25-residue polypeptide: Chaperonin GroEL (25 aa).

It belongs to the chaperonin (HSP60) family. In terms of assembly, forms a cylinder of 14 subunits composed of two heptameric rings stacked back-to-back. Interacts with the co-chaperonin GroES.

It is found in the cytoplasm. The enzyme catalyses ATP + H2O + a folded polypeptide = ADP + phosphate + an unfolded polypeptide.. In terms of biological role, together with its co-chaperonin GroES, plays an essential role in assisting protein folding. The GroEL-GroES system forms a nano-cage that allows encapsulation of the non-native substrate proteins and provides a physical environment optimized to promote and accelerate protein folding. This is Chaperonin GroEL from Delftia acidovorans (Pseudomonas acidovorans).